Consider the following 450-residue polypeptide: Paired box protein Pax-8 (450 aa).

A DNA-binding region (paired) is located at residues 9–135 (GHGGLNQLGG…SSINRIIRTK (127 aa)). The tract at residues 12–68 (GLNQLGGAFVNGRPLPEVVRQRIVDLAHQGVRPCDISRQLRVSHGCVSKILGRYYET) is PAI subdomain. The interval 87–135 (KVVEKIGDYKRQNPTMFAWEIRDRLLAEGVCDNDTVPSVSSINRIIRTK) is RED subdomain. Residues 159–182 (LIPSSAVTPPESPQSDSLGSTYSI) are compositionally biased toward polar residues. The segment at 159 to 222 (LIPSSAVTPP…QSSSSGPRKH (64 aa)) is disordered. Serine 303 is subject to Phosphoserine.

In terms of assembly, interacts with WWTR1. Expressed in the excretory system, thyroid gland and Wilms tumors.

The protein localises to the nucleus. Its function is as follows. Transcription factor for the thyroid-specific expression of the genes exclusively expressed in the thyroid cell type, maintaining the functional differentiation of such cells. This is Paired box protein Pax-8 (PAX8) from Homo sapiens (Human).